A 1236-amino-acid chain; its full sequence is ESX-4 secretion system protein EccC4 (1236 aa).

The next 2 membrane-spanning stretches (helical) occupy residues 32 to 52 and 59 to 79; these read LLPVVMSVATVGVMVTVFLPG and PTFLAFPMMMLVSLVVTAVTG. 3 FtsK domains span residues 407 to 607, 747 to 936, and 1018 to 1201; these read GTAV…SESR, RVPL…ADSE, and GQPV…DEGA. Residues 430–437, 765–772, and 1035–1042 contribute to the ATP site; these read GATGSGKS, GAPQTGKS, and GDNECGKT.

Part of the ESX-4 / type VII secretion system (T7SS), which is composed of cytosolic and membrane components.

The protein localises to the cell membrane. In Mycobacterium tuberculosis (strain ATCC 25618 / H37Rv), this protein is ESX-4 secretion system protein EccC4 (eccC4).